A 1045-amino-acid chain; its full sequence is MEVALPNVPTKMQHPFTKYSEWKFKLFRVKSLERRPSEEETEGSEVSYNSSQETYPKSTVVLEDLSLGSAPQSPTNFKPQQSEKSNVVDNHETDLKRLEEEAHITVIQQLCRICGASFKMDQQNRSYPVHGPVDSETHDILRRREKKVTSWPELISKVFKTDVRADVDTIHPTQFCHNCWTIMNQKFSNISSEVYFPHNQAVEWTPHSANCYVCHSSKPWGKRKSAPQLNPHKMKKRKRGPEFVKKSKTSSGNSIQWKNMKAFNQMKDSCKKIHLDNNLLVLDYPSDFVKSVSCLVCEHILSDPVQTSCKHLFCRICILKYIKLMGCYCPSCKYPCFPTDLTVPVKSYLNVLNALLLKCTVSGCDEEISLGKYSHHISKHKETKGKEVYAHINKGGRPRQHLLTLTRRAQKHRLRELKMQVKAFADKEEEGDVKSVCLTLFLLALRARNEHRQADELEAIMEGRGAGLHPAVCLAIRVNTFLSCSQYHKMYRTVKATTGRQIFQPLHALRNAEKALIPGYHTFEWRPPLKNVSTRTDVGIIDGLSGLNQSLDEYPVDTISKRFRYDAALVSALKDMEEDILEGLKAQDLDDYVSGPFTVVVKESCDGMGDVSEKHGSGPPVPEKAVRFSFTVMNISVPNKNGPVRIFEETKPNSELCCKPLCLMLADESDHETLTAILSPLIAEREAMKTAELLLEMGGILRNFKFSFRGTGYDEKLVREVEGLEASGSLYICTLCDATRLEAAQNLVNHSITRSHCENLQRYEMWRSNPHHESPDELRDRVKGVSAKPFIETLPSIDALHCDIGNAAEFYRIFQLEIGELYKNLSATKEEKKRWQATLDNHIRKRMNLKPIMRMNGNFARKLMSKETVEAVCELVPCEERQAALTELMDLYLKMKPVWRSSCPAKECPELLCQYSFHSQRFAELLSTKFKYRYEGKITNYFHKTLAHVPEIIERDGSIGAWASEGNESGNKLFRRFRKMNARQSKFYEMEDVLKHHWLYTSKYLQKFMNAHNNLKNQGFTVDLDNPDLEQRLESSMESLESMEF.

3 disordered regions span residues 33 to 55, 67 to 87, and 222 to 253; these read ERRPSEEETEGSEVSYNSSQETY, LGSAPQSPTNFKPQQSEKSNV, and KRKSAPQLNPHKMKKRKRGPEFVKKSKTSSGN. 2 stretches are compositionally biased toward polar residues: residues 44–55 and 69–87; these read SEVSYNSSQETY and SAPQSPTNFKPQQSEKSNV. C270, H274, C294, C297, H299, C309, H311, C314, C317, C329, C332, C359, C364, H376, and H380 together coordinate Zn(2+). The RING-type zinc finger occupies 294–333; sequence CLVCEHILSDPVQTSCKHLFCRICILKYIKLMGCYCPSCK. The RAG1-type zinc finger occupies 355–384; sequence LLLKCTVSGCDEEISLGKYSHHISKHKETK. A DNA-binding region (NBD) is located at residues 395 to 462; that stretch reads GGRPRQHLLT…QADELEAIME (68 aa). The a divalent metal cation site is built by D606, D714, and E968.

The protein belongs to the RAG1 family. In terms of assembly, homodimer. Component of the RAG complex composed of core components rag1 and rag2. Requires Mg(2+) as cofactor. The cofactor is Mn(2+). Expressed within the thymus, liver and spleen in juvenile frogs, and within the thymus and bone marrow of adults.

It is found in the nucleus. It carries out the reaction S-ubiquitinyl-[E2 ubiquitin-conjugating enzyme]-L-cysteine + [acceptor protein]-L-lysine = [E2 ubiquitin-conjugating enzyme]-L-cysteine + N(6)-ubiquitinyl-[acceptor protein]-L-lysine.. Catalytic component of the RAG complex, a multiprotein complex that mediates the DNA cleavage phase during V(D)J recombination. V(D)J recombination assembles a diverse repertoire of immunoglobulin and T-cell receptor genes in developing B and T lymphocytes through rearrangement of different V (variable), in some cases D (diversity), and J (joining) gene segments. In the RAG complex, RAG1 mediates the DNA-binding to the conserved recombination signal sequences (RSS) and catalyzes the DNA cleavage activities by introducing a double-strand break between the RSS and the adjacent coding segment. RAG2 is not a catalytic component but is required for all known catalytic activities. DNA cleavage occurs in 2 steps: a first nick is introduced in the top strand immediately upstream of the heptamer, generating a 3'-hydroxyl group that can attack the phosphodiester bond on the opposite strand in a direct transesterification reaction, thereby creating 4 DNA ends: 2 hairpin coding ends and 2 blunt, 5'-phosphorylated ends. In addition to its endonuclease activity, RAG1 also acts as an E3 ubiquitin-protein ligase that mediates monoubiquitination of histone H3. Histone H3 monoubiquitination is required for the joining step of V(D)J recombination. This chain is V(D)J recombination-activating protein 1 (rag1), found in Xenopus laevis (African clawed frog).